We begin with the raw amino-acid sequence, 270 residues long: Sulfur carrier protein FdhD (270 aa).

C116 serves as the catalytic Cysteine persulfide intermediate. Residue 253–258 participates in Mo-bis(molybdopterin guanine dinucleotide) binding; sequence FAREGK.

Belongs to the FdhD family.

It localises to the cytoplasm. Functionally, required for formate dehydrogenase (FDH) activity. Acts as a sulfur carrier protein that transfers sulfur from IscS to the molybdenum cofactor prior to its insertion into FDH. This Haemophilus influenzae (strain ATCC 51907 / DSM 11121 / KW20 / Rd) protein is Sulfur carrier protein FdhD.